The chain runs to 782 residues: MSKVRVYEYAKEHQVSSKKVIEALKDLGIEVANHMSTINENALRQLDNAIDGTNKKAEAPKKETTSNENGNSKGPNKPNMTNSNEKSNKPNNPAGQANKPATANKSQGAKPATNKPANTSKQTQSSGNQQQAGGQKRNNNNNSNRPGGGNPNRPGGNNRPNRGGNFNNKGRNTKKKGKLNHSTVPPTPPKPKELPEKIVFSESLTVAELAKKLYREPSELIKKLFMLGVVATINQSLDKDAIELICDDYGVQVEEEIKVDVTDLDVYFENELNEAVDESKLVERPPVVTIMGHVDHGKTTLLDSLRNTKVTLGEAGGITQHIGAYQLEIHDKKITFLDTPGHAAFTAMRARGAQITDITILVVAADDGVMPQTIEAINHAKAAGMPIIVAVNKIDKPQANPDRVMQELTEYELVPEAWGGDTIFAPISAKFGEGLENLLDMILLVSEVEELKANPDRRAIGSVIEAELDKGRGPVATLLVQDGTLNIGDPIVVGNTFGRVRAMVNDLGRRVKKVGPSTPVEITGLNDVPQAGDRFVVFEDEKTARNIGETRASRALVAQRSATNRVSLDNLFEHMKAGEMKEVNVIIKADVQGSVEALAASLRKIDVEGVNVKIIHTAVGAINESDITLAAASNAIVIGFNVRPTAQAREAAENESVDIRLHRVIYKAIDEIEAAMKGMLDPEFQEKIIGQAQVRQTINVSKVGTIAGCYVTDGKITRDSGVRIIRDGIVVFEGEIATLKRFKDDAKEVAKGYECGITVQNFNDIKEDDVIEAYVMEEIERK.

Positions 47 to 196 (DNAIDGTNKK…TPPKPKELPE (150 aa)) are disordered. Positions 53–65 (TNKKAEAPKKETT) are enriched in basic and acidic residues. Over residues 66–81 (SNENGNSKGPNKPNMT) the composition is skewed to polar residues. Composition is skewed to low complexity over residues 82-93 (NSNEKSNKPNNP) and 118-170 (NTSK…NNKG). A tr-type G domain is found at 283 to 452 (ERPPVVTIMG…LLVSEVEELK (170 aa)). The G1 stretch occupies residues 292-299 (GHVDHGKT). GTP is bound at residue 292-299 (GHVDHGKT). The tract at residues 317 to 321 (GITQH) is G2. The interval 338–341 (DTPG) is G3. GTP contacts are provided by residues 338 to 342 (DTPGH) and 392 to 395 (NKID). The G4 stretch occupies residues 392–395 (NKID). Positions 428 to 430 (SAK) are G5.

The protein belongs to the TRAFAC class translation factor GTPase superfamily. Classic translation factor GTPase family. IF-2 subfamily.

It localises to the cytoplasm. One of the essential components for the initiation of protein synthesis. Protects formylmethionyl-tRNA from spontaneous hydrolysis and promotes its binding to the 30S ribosomal subunits. Also involved in the hydrolysis of GTP during the formation of the 70S ribosomal complex. The protein is Translation initiation factor IF-2 of Listeria monocytogenes serotype 4b (strain CLIP80459).